A 244-amino-acid chain; its full sequence is Flavin-dependent thymidylate synthase (244 aa).

The region spanning 7 to 199 (PRVFLIASWG…PNLARLVWED (193 aa)) is the ThyX domain. FAD contacts are provided by residues serine 60 and 83-85 (RHR). DUMP contacts are provided by residues 80–83 (QFIR), 93–95 (SQR), and arginine 137. The short motif at 83–93 (RHRMASYWSES) is the ThyX motif element. Residues 153-155 (NAR) and asparagine 160 contribute to the FAD site. Arginine 165 contributes to the dUMP binding site. Arginine 165 acts as the Involved in ionization of N3 of dUMP, leading to its activation in catalysis.

It belongs to the thymidylate synthase ThyX family. In terms of assembly, homotetramer. The cofactor is FAD.

The enzyme catalyses dUMP + (6R)-5,10-methylene-5,6,7,8-tetrahydrofolate + NADPH + H(+) = dTMP + (6S)-5,6,7,8-tetrahydrofolate + NADP(+). It participates in pyrimidine metabolism; dTTP biosynthesis. In terms of biological role, catalyzes the reductive methylation of 2'-deoxyuridine-5'-monophosphate (dUMP) to 2'-deoxythymidine-5'-monophosphate (dTMP) while utilizing 5,10-methylenetetrahydrofolate (mTHF) as the methyl donor, and NADPH and FADH(2) as the reductant. The sequence is that of Flavin-dependent thymidylate synthase from Pyrobaculum aerophilum (strain ATCC 51768 / DSM 7523 / JCM 9630 / CIP 104966 / NBRC 100827 / IM2).